A 317-amino-acid chain; its full sequence is Olfactory receptor 5K16 (317 aa).

Topologically, residues 1 to 28 (MEKTNHSLTTQFILVGFSDHPDLKTPLF) are extracellular. N-linked (GlcNAc...) asparagine glycosylation is present at N5. A helical transmembrane segment spans residues 29–49 (LLFSVIYLVTMVGNLGLVAVI). At 50-56 (YLEPRLH) the chain is on the cytoplasmic side. The helical transmembrane segment at 57–77 (TPMYIFLGNLALMDSCCSCAI) threads the bilayer. Over 78–93 (TPKILENFFSVDRRIS) the chain is Extracellular. Residues 94-114 (LYECMAQFYFLCLAETADCFL) form a helical membrane-spanning segment. A disulfide bond links C97 and C189. Residues 115–144 (LAAMAYDRYVAICNPLQYHSMMSKKLSIQM) lie on the Cytoplasmic side of the membrane. The helical transmembrane segment at 145 to 165 (SIGTFITSNLHSLIHVGCLLR) threads the bilayer. The Extracellular segment spans residues 166–198 (LTFCKSNRIDHFFCDILPLYRLSCTDPFINELM). Residues 199–219 (IYIFSMPIQVFTITTVLVSYF) form a helical membrane-spanning segment. Over 220–239 (CILLTIFKMKSKDGRGKAFS) the chain is Cytoplasmic. A helical membrane pass occupies residues 240–259 (TCASHFFSVSIFYVCLLMYI). At 260-268 (RPFDEGNKD) the chain is on the extracellular side. The chain crosses the membrane as a helical span at residues 269 to 289 (IPVAVFYTIIIPLLNPFIYSL). Topologically, residues 290–317 (RNKEVVNAVKKVMKTHSIFKNASASMAR) are cytoplasmic.

The protein belongs to the G-protein coupled receptor 1 family.

The protein resides in the cell membrane. Its function is as follows. Potential odorant receptor. The sequence is that of Olfactory receptor 5K16 from Mus musculus (Mouse).